Consider the following 325-residue polypeptide: MNLKKHSERKFDLITVGRACIDLNAVEYNRPMEETMTFSKYVGGSPANIAIGTAKLGLKVGFIGKISDDQHGRFIEKYMRDLAINTDGMVKDTEGRKVGLAFTEIKSPDECSILMYRENVADLYLTPEEISEDYIKEARVLLISGTALAQSPSREAVLKAVSLARKNDVVVAFELDYRPYTWKNSEETAVYYSLVAEQADVIIGTRDEFDMMENQVGGKNEATKAYLFQHQAKIVVIKHGVEGSFAYTKAGETFQAQAYKTKVLKTFGAGDSYASAFLYGLFSDESIETALKYGSAAASIVVSKHSSSDAMPTADEIKALIAQAE.

This sequence belongs to the carbohydrate kinase PfkB family.

The enzyme catalyses 5-dehydro-2-deoxy-D-gluconate + ATP = 6-phospho-5-dehydro-2-deoxy-D-gluconate + ADP + H(+). Its pathway is polyol metabolism; myo-inositol degradation into acetyl-CoA; acetyl-CoA from myo-inositol: step 5/7. Functionally, catalyzes the phosphorylation of 5-dehydro-2-deoxy-D-gluconate (2-deoxy-5-keto-D-gluconate or DKG) to 6-phospho-5-dehydro-2-deoxy-D-gluconate (DKGP). In Listeria monocytogenes serovar 1/2a (strain ATCC BAA-679 / EGD-e), this protein is 5-dehydro-2-deoxygluconokinase.